The primary structure comprises 103 residues: Small ribosomal subunit protein uS10 (103 aa).

Belongs to the universal ribosomal protein uS10 family. As to quaternary structure, part of the 30S ribosomal subunit.

In terms of biological role, involved in the binding of tRNA to the ribosomes. The protein is Small ribosomal subunit protein uS10 of Persephonella marina (strain DSM 14350 / EX-H1).